The primary structure comprises 446 residues: Na(+)-translocating NADH-quinone reductase subunit A (446 aa).

Belongs to the NqrA family. In terms of assembly, composed of six subunits; NqrA, NqrB, NqrC, NqrD, NqrE and NqrF.

It catalyses the reaction a ubiquinone + n Na(+)(in) + NADH + H(+) = a ubiquinol + n Na(+)(out) + NAD(+). Its function is as follows. NQR complex catalyzes the reduction of ubiquinone-1 to ubiquinol by two successive reactions, coupled with the transport of Na(+) ions from the cytoplasm to the periplasm. NqrA to NqrE are probably involved in the second step, the conversion of ubisemiquinone to ubiquinol. The sequence is that of Na(+)-translocating NADH-quinone reductase subunit A from Vibrio vulnificus (strain CMCP6).